The following is a 212-amino-acid chain: Imidazole glycerol phosphate synthase subunit HisH (212 aa).

Positions 3-212 (TVAVIDYGMG…QNFIAWDGRW (210 aa)) constitute a Glutamine amidotransferase type-1 domain. The Nucleophile role is filled by C81. Catalysis depends on residues H190 and E192.

As to quaternary structure, heterodimer of HisH and HisF.

It is found in the cytoplasm. The enzyme catalyses 5-[(5-phospho-1-deoxy-D-ribulos-1-ylimino)methylamino]-1-(5-phospho-beta-D-ribosyl)imidazole-4-carboxamide + L-glutamine = D-erythro-1-(imidazol-4-yl)glycerol 3-phosphate + 5-amino-1-(5-phospho-beta-D-ribosyl)imidazole-4-carboxamide + L-glutamate + H(+). It catalyses the reaction L-glutamine + H2O = L-glutamate + NH4(+). It functions in the pathway amino-acid biosynthesis; L-histidine biosynthesis; L-histidine from 5-phospho-alpha-D-ribose 1-diphosphate: step 5/9. IGPS catalyzes the conversion of PRFAR and glutamine to IGP, AICAR and glutamate. The HisH subunit catalyzes the hydrolysis of glutamine to glutamate and ammonia as part of the synthesis of IGP and AICAR. The resulting ammonia molecule is channeled to the active site of HisF. The sequence is that of Imidazole glycerol phosphate synthase subunit HisH from Pseudomonas putida (strain ATCC 47054 / DSM 6125 / CFBP 8728 / NCIMB 11950 / KT2440).